A 556-amino-acid polypeptide reads, in one-letter code: CDP-diacylglycerol--glycerol-3-phosphate 3-phosphatidyltransferase, mitochondrial (556 aa).

The N-terminal 28 residues, 1-28 (MAVAAAAAAGPVFWRRLLGLLPGRPGLA), are a transit peptide targeting the mitochondrion. Ser-49 is subject to Phosphoserine. 124 to 131 (ASLYLGTG) lines the ATP pocket. PLD phosphodiesterase domains lie at 215 to 241 (TIGL…SDSY) and 460 to 493 (RGWT…GYRS). Active-site residues include His-220, Lys-222, and Asp-227.

The protein belongs to the CDP-alcohol phosphatidyltransferase class-II family.

It is found in the mitochondrion. It carries out the reaction a CDP-1,2-diacyl-sn-glycerol + sn-glycerol 3-phosphate = a 1,2-diacyl-sn-glycero-3-phospho-(1'-sn-glycero-3'-phosphate) + CMP + H(+). The protein operates within phospholipid metabolism; phosphatidylglycerol biosynthesis; phosphatidylglycerol from CDP-diacylglycerol: step 1/2. Its activity is regulated as follows. Activated by calcium and magnesium and inhibited by other bivalent cations. In terms of biological role, functions in the biosynthesis of the anionic phospholipids phosphatidylglycerol and cardiolipin. The protein is CDP-diacylglycerol--glycerol-3-phosphate 3-phosphatidyltransferase, mitochondrial (PGS1) of Homo sapiens (Human).